Reading from the N-terminus, the 321-residue chain is Putative zinc finger CCCH domain-containing protein 9 (321 aa).

Disordered stretches follow at residues 1–59 (MADA…PGKK) and 181–269 (REAE…NLQE). Residues 10 to 29 (EAERRSDETESRSIKEPKEK) are compositionally biased toward basic and acidic residues. The C3H1-type zinc finger occupies 55–83 (RPGKKDCQFYLKNGLCRYRSSCRFNHPTQ). Residues 164 to 290 (TEWRFERERM…EARLRLEQIR (127 aa)) adopt a coiled-coil conformation. Composition is skewed to basic and acidic residues over residues 181-224 (REAE…REAQ) and 231-244 (RQRDSIERQRREAQ).

This chain is Putative zinc finger CCCH domain-containing protein 9, found in Arabidopsis thaliana (Mouse-ear cress).